A 311-amino-acid polypeptide reads, in one-letter code: Methionyl-tRNA formyltransferase (311 aa).

A (6S)-5,6,7,8-tetrahydrofolate-binding site is contributed by 110–113 (SLLP).

It belongs to the Fmt family.

It carries out the reaction L-methionyl-tRNA(fMet) + (6R)-10-formyltetrahydrofolate = N-formyl-L-methionyl-tRNA(fMet) + (6S)-5,6,7,8-tetrahydrofolate + H(+). Its function is as follows. Attaches a formyl group to the free amino group of methionyl-tRNA(fMet). The formyl group appears to play a dual role in the initiator identity of N-formylmethionyl-tRNA by promoting its recognition by IF2 and preventing the misappropriation of this tRNA by the elongation apparatus. The chain is Methionyl-tRNA formyltransferase from Streptococcus gordonii (strain Challis / ATCC 35105 / BCRC 15272 / CH1 / DL1 / V288).